The sequence spans 240 residues: Predicted GPI-anchored protein 58 (240 aa).

The first 18 residues, 1–18 (MQFSTLVSLAAVIVSTNA), serve as a signal peptide directing secretion. Positions 41 to 216 (HTNCPASSPA…NSTGPSSVPT (176 aa)) are disordered. Over residues 51–86 (TPAPAPSASAPAPPAPEQPEPSAPAPAPSAPAPEQP) the composition is skewed to pro residues. A compositionally biased stretch (low complexity) spans 87-103 (EQPATPATPAAPATPAT). Pro residues-rich tracts occupy residues 104-137 (PAAP…PEQP) and 153-192 (APAP…PAPS). Positions 193 to 216 (APASVPEQPASSVSNSTGPSSVPT) are enriched in low complexity. The N-linked (GlcNAc...) asparagine glycan is linked to N207. The GPI-anchor amidated glycine moiety is linked to residue G219. A propeptide spans 220-240 (AAAKQYITGSVAVIAAALLAL) (removed in mature form).

The protein resides in the cell membrane. This Candida albicans (strain SC5314 / ATCC MYA-2876) (Yeast) protein is Predicted GPI-anchored protein 58 (PGA58).